The primary structure comprises 313 residues: WD repeat-containing protein 82 (313 aa).

6 WD repeats span residues 19–58, 105–144, 146–184, 192–231, 236–276, and 280–313; these read ENSD…PKRT, GHSK…CQGL, HLQG…KGPF, DRTC…VMHT, ANSK…KVAV, and KHTG…TIDD.

Belongs to the WD repeat SWD2 family. As to quaternary structure, component of the SET1/COMPASS complex, at least composed of the catalytic subunit (SETD1A or SETD1B), WDR5, WDR82, RBBP5, ASH2L/ASH2, CXXC1/CFP1, HCFC1 and DPY30. Component of the PNUTS-PP1 phosphatase complex, composed of PPP1R10/PNUTS, TOX4, WDR82, and PPP1CA or PPP1CB or PPP1CC. Associated with multiple protein complexes including an RNA polymerase II complex, MLL3/MLL4 complex and a chaperonin-containing TCP1 complex. Interacts with SETD1B (via N-terminal region); the interaction is direct. Interacts with SETD1A (via N-terminal region); the interaction is direct. Interacts with CUL4B. Interacts with RBBP5. Interacts with POLR2B. Interacts with hyperphosphorylated C-terminal domain (CTD) of RNA polymerase II large subunit (POLR2A). Binds specifically to CTD heptad repeats phosphorylated on 'Ser-5' of each heptad. SETD1A enhances its interaction with POLR2A. Interacts with PPP1R10/PNUTS. Interacts with PPP1CA in the presence of PPP1R10/PNUTS. Interacts with ZC3H4; interaction is independent of the SET1 complex and promotes transcription termination of long non-coding RNAs (lncRNAs).

It is found in the nucleus. The protein resides in the chromosome. Its subcellular location is the cytoplasm. Functionally, regulatory component of the SET1/COMPASS complex implicated in the tethering of this complex to transcriptional start sites of active genes. Facilitates histone H3 'Lys-4' methylation (H3K4me) via recruitment of the SETD1A or SETD1B to the 'Ser-5' phosphorylated C-terminal domain (CTD) of RNA polymerase II large subunit (POLR2A). Component of the PNUTS-PP1 protein phosphatase complex, a protein phosphatase 1 (PP1) complex that promotes RNA polymerase II transcription pause-release, allowing transcription elongation. PNUTS-PP1 also plays a role in the control of chromatin structure and cell cycle progression during the transition from mitosis into interphase. Together with ZC3H4, but independently of the SET1 complex, part of a transcription termination checkpoint that promotes transcription termination of long non-coding RNAs (lncRNAs). The transcription termination checkpoint is activated by the inefficiently spliced first exon of lncRNAs and promotes transcription termination of lncRNAs and their subsequent degradation by the exosome. The sequence is that of WD repeat-containing protein 82 from Homo sapiens (Human).